Here is a 258-residue protein sequence, read N- to C-terminus: UPF0246 protein ABO_1338 (258 aa).

It belongs to the UPF0246 family.

This Alcanivorax borkumensis (strain ATCC 700651 / DSM 11573 / NCIMB 13689 / SK2) protein is UPF0246 protein ABO_1338.